The following is a 204-amino-acid chain: Large ribosomal subunit protein eL15 (204 aa).

Disordered stretches follow at residues 71–91 (RKRP…GVNQ) and 159–182 (REMR…HYSQ). Residues 159–174 (REMRGKTSAGRKHRGL) are compositionally biased toward basic residues.

The protein belongs to the eukaryotic ribosomal protein eL15 family.

The protein is Large ribosomal subunit protein eL15 (RPL15) of Faxonius limosus (Spinycheek crayfish).